Reading from the N-terminus, the 308-residue chain is UDP-N-acetylenolpyruvoylglucosamine reductase (308 aa).

An FAD-binding PCMH-type domain is found at arginine 22–glycine 185. The active site involves arginine 165. The segment covering glutamine 197–serine 211 has biased composition (basic and acidic residues). Positions glutamine 197–alanine 228 are disordered. Residues alanine 212 to glycine 226 are compositionally biased toward polar residues. Residue serine 214 is the Proton donor of the active site. Glutamate 296 is an active-site residue.

Belongs to the MurB family. FAD serves as cofactor.

It localises to the cytoplasm. It catalyses the reaction UDP-N-acetyl-alpha-D-muramate + NADP(+) = UDP-N-acetyl-3-O-(1-carboxyvinyl)-alpha-D-glucosamine + NADPH + H(+). The protein operates within cell wall biogenesis; peptidoglycan biosynthesis. In terms of biological role, cell wall formation. The protein is UDP-N-acetylenolpyruvoylglucosamine reductase of Cereibacter sphaeroides (strain ATCC 17025 / ATH 2.4.3) (Rhodobacter sphaeroides).